Reading from the N-terminus, the 88-residue chain is Small ribosomal subunit protein bS16c (88 aa).

It belongs to the bacterial ribosomal protein bS16 family.

The protein resides in the plastid. It localises to the chloroplast. The polypeptide is Small ribosomal subunit protein bS16c (Lactuca sativa (Garden lettuce)).